Reading from the N-terminus, the 122-residue chain is Large ribosomal subunit protein uL14 (122 aa).

It belongs to the universal ribosomal protein uL14 family. Part of the 50S ribosomal subunit. Forms a cluster with proteins L3 and L19. In the 70S ribosome, L14 and L19 interact and together make contacts with the 16S rRNA in bridges B5 and B8.

Binds to 23S rRNA. Forms part of two intersubunit bridges in the 70S ribosome. The protein is Large ribosomal subunit protein uL14 of Corynebacterium efficiens (strain DSM 44549 / YS-314 / AJ 12310 / JCM 11189 / NBRC 100395).